The chain runs to 544 residues: Chaperonin GroEL (544 aa).

ATP is bound by residues 30–33 (TLGP), 87–91 (DGTTT), G414, 478–480 (NAL), and D494.

Belongs to the chaperonin (HSP60) family. As to quaternary structure, forms a cylinder of 14 subunits composed of two heptameric rings stacked back-to-back. Interacts with the co-chaperonin GroES.

The protein localises to the cytoplasm. The enzyme catalyses ATP + H2O + a folded polypeptide = ADP + phosphate + an unfolded polypeptide.. Functionally, together with its co-chaperonin GroES, plays an essential role in assisting protein folding. The GroEL-GroES system forms a nano-cage that allows encapsulation of the non-native substrate proteins and provides a physical environment optimized to promote and accelerate protein folding. In Pelotomaculum thermopropionicum (strain DSM 13744 / JCM 10971 / SI), this protein is Chaperonin GroEL.